The chain runs to 191 residues: Calcium and integrin-binding protein 1 (191 aa).

G2 carries the N-myristoyl glycine lipid modification. 2 EF-hand domains span residues 103 to 138 (TPDIKSHYAFRIFDFDDDGTLNREDLSRLVNCLTGE) and 148 to 183 (EMKQLIDNILEESDIDRDGTINLSEFQHVISRSPDF). Ca(2+) is bound by residues D116, D118, D120, T122, D127, D161, D163, D165, T167, and E172. D118 is modified (phosphoserine).

In terms of assembly, monomer. Interacts with MYO1C. Interacts (via C-terminal region) with PPP3R1 and CACNA1C; the interactions increase upon cardiomyocytes hypertrophy. Interacts with the heterodimeric integrin alpha-IIb/beta3 (ITGA2B-ITGB3). Interacts with ITGA2B (via cytoplasmic domain); the interaction is direct and calcium-dependent. Interacts with the protein kinases PLK2/SNK and PRKDC (via the region immediately upstream of the kinase domain). Interacts with PLK3; the interaction inhibits PLK3 kinase activity. Interacts with PSEN2. Interacts (via C-terminus) with F8. Interacts with NBR1 (via C-terminus). Interacts with FEZ1 (via C-terminus). Interacts with UBR5 (via C-terminus); the interaction is sensitive to DNA damage, and may target CIB1 for ubiquitin-mediated degradation. Interacts with IFI6; the interaction is direct. Interacts with BCL2. Interacts with ITPR3; the interaction occurs in a calcium-dependent manner. Interacts with PTK2/FAK1. Interacts with MAP3K5; the interaction inhibits MAP3K5 activation by phosphorylation, and its subsequent interaction with TRAF2. Isoform 2 interacts with PRKD2 (via N-terminal AP-rich region), PTK2/FAK1 and PAK1. Interacts with TAS1R2 (via C-terminus); the interaction is independent of the myristoylation state of CIB1. Interacts (via C-terminal region) with STMN2 (via the N-terminal region); the interaction is direct, occurs in a calcium-dependent manner and attenuates the STMN2-induced neurite outgrowth inhibition. Interacts with SPHK1, the interaction occurs in a calcium-dependent manner. Interacts with ITGA2B (via C-terminal cytoplasmic tail); the interaction occurs upon platelet aggregation and is stabilized/increased in a calcium and magnesium-dependent manner. Interacts with PAK1 (via N-terminal region); the interaction is direct and occurs in a calcium-dependent manner. Interacts with RAC3 (via C-terminal region); the interaction induces their association with the cytoskeleton upon alpha-IIb/beta3 integrin-mediated adhesion. Interacts with ITGA5 and ITGAV. Interacts and forms a complex with TMC6 and TMC8; the interaction stabilizes each component of the complex. (Microbial infection) Interacts with human papillomavirus 4/HPV4 protein E8, human papillomavirus 5/HPV5 protein E1, and human papillomavirus 16/HPV16 proteins E2 and E5. Post-translationally, phosphorylation of isoform 2 at Ser-118 by PRKD2 increases its ability to stimulate tumor angiogenesis. In terms of tissue distribution, ubiquitously expressed. Expressed in the epidermis, hair follicles and keratinocytes. Detected in platelets and in cell lines of megakaryocytic and erythrocytic lineages. Both isoform 1 and isoform 2 are detected in various cancer cell lines, with isoform 2 being the predominant form (at protein level).

It localises to the membrane. Its subcellular location is the cell membrane. It is found in the sarcolemma. The protein resides in the apical cell membrane. The protein localises to the cell projection. It localises to the ruffle membrane. Its subcellular location is the filopodium tip. It is found in the growth cone. The protein resides in the lamellipodium. The protein localises to the cytoplasm. It localises to the cytoskeleton. Its subcellular location is the microtubule organizing center. It is found in the centrosome. The protein resides in the perinuclear region. The protein localises to the nucleus. It localises to the neuron projection. Its subcellular location is the perikaryon. It is found in the golgi apparatus. The protein resides in the trans-Golgi network. In terms of biological role, calcium-binding protein that plays a role in the regulation of numerous cellular processes, such as cell differentiation, cell division, cell proliferation, cell migration, thrombosis, angiogenesis, cardiac hypertrophy and apoptosis. Involved in bone marrow megakaryocyte differentiation by negatively regulating thrombopoietin-mediated signaling pathway. Participates in the endomitotic cell cycle of megakaryocyte, a form of mitosis in which both karyokinesis and cytokinesis are interrupted. Plays a role in integrin signaling by negatively regulating alpha-IIb/beta3 activation in thrombin-stimulated megakaryocytes preventing platelet aggregation. Up-regulates PTK2/FAK1 activity, and is also needed for the recruitment of PTK2/FAK1 to focal adhesions; it thus appears to play an important role in focal adhesion formation. Positively regulates cell migration on fibronectin in a CDC42-dependent manner, the effect being negatively regulated by PAK1. Functions as a negative regulator of stress activated MAP kinase (MAPK) signaling pathways. Down-regulates inositol 1,4,5-trisphosphate receptor-dependent calcium signaling. Involved in sphingosine kinase SPHK1 translocation to the plasma membrane in a N-myristoylation-dependent manner preventing TNF-alpha-induced apoptosis. Regulates serine/threonine-protein kinase PLK3 activity for proper completion of cell division progression. Plays a role in microtubule (MT) dynamics during neuronal development; disrupts the MT depolymerization activity of STMN2 attenuating NGF-induced neurite outgrowth and the MT reorganization at the edge of lamellipodia. Promotes cardiomyocyte hypertrophy via activation of the calcineurin/NFAT signaling pathway. Stimulates calcineurin PPP3R1 activity by mediating its anchoring to the sarcolemma. In ischemia-induced (pathological or adaptive) angiogenesis, stimulates endothelial cell proliferation, migration and microvessel formation by activating the PAK1 and ERK1/ERK2 signaling pathway. Also promotes cancer cell survival and proliferation. May regulate cell cycle and differentiation of spermatogenic germ cells, and/or differentiation of supporting Sertoli cells. Forms a complex with TMC6/EVER1 and TMC8/EVER2 in lymphocytes and keratynocytes where CIB1 stabilizes TMC6 and TMC8 levels and reciprocally. Acts as a restriction factor that promotes keratinocyte-intrinsic immunity to human beta-papillomaviruses (HPVs). Functionally, plays a regulatory role in angiogenesis and tumor growth by mediating PKD/PRKD2-induced vascular endothelial growth factor A (VEGFA) secretion. The sequence is that of Calcium and integrin-binding protein 1 (CIB1) from Homo sapiens (Human).